The primary structure comprises 364 residues: Ribosomal RNA large subunit methyltransferase F (364 aa).

The disordered stretch occupies residues 1–52; the sequence is MPKPAIKTAAKLAMSSAGKRGKPSTPKSLAKPQTTKPKTASKLKAKHGEQKR. Positions 25–38 are enriched in polar residues; that stretch reads TPKSLAKPQTTKPK.

It belongs to the methyltransferase superfamily. METTL16/RlmF family.

The protein localises to the cytoplasm. The enzyme catalyses adenosine(1618) in 23S rRNA + S-adenosyl-L-methionine = N(6)-methyladenosine(1618) in 23S rRNA + S-adenosyl-L-homocysteine + H(+). Its function is as follows. Specifically methylates the adenine in position 1618 of 23S rRNA. The chain is Ribosomal RNA large subunit methyltransferase F from Shewanella sp. (strain ANA-3).